A 525-amino-acid chain; its full sequence is Ent-kaurene oxidase (525 aa).

The helical transmembrane segment at 31 to 51 (VHWLIYVAFGAWLCSYVIHVL) threads the bilayer. Cys-466 provides a ligand contact to heme.

The protein belongs to the cytochrome P450 family. Heme is required as a cofactor.

Its subcellular location is the membrane. The enzyme catalyses ent-kaur-16-ene + 3 reduced [NADPH--hemoprotein reductase] + 3 O2 = ent-kaur-16-en-19-oate + 3 oxidized [NADPH--hemoprotein reductase] + 4 H2O + 4 H(+). The protein operates within plant hormone biosynthesis; gibberellin biosynthesis. In terms of biological role, catalyzes three successive oxidations of the 4-methyl group of ent-kaurene giving kaurenoic acid, a key step in gibberellin (GA) biosynthesis. The protein is Ent-kaurene oxidase (CYP503A1) of Fusarium fujikuroi (Bakanae and foot rot disease fungus).